The chain runs to 188 residues: Elongation factor P (188 aa).

It belongs to the elongation factor P family.

The protein localises to the cytoplasm. It participates in protein biosynthesis; polypeptide chain elongation. Its function is as follows. Involved in peptide bond synthesis. Stimulates efficient translation and peptide-bond synthesis on native or reconstituted 70S ribosomes in vitro. Probably functions indirectly by altering the affinity of the ribosome for aminoacyl-tRNA, thus increasing their reactivity as acceptors for peptidyl transferase. The chain is Elongation factor P from Rhodospirillum centenum (strain ATCC 51521 / SW).